Reading from the N-terminus, the 733-residue chain is Alpha,alpha-trehalose-phosphate synthase [UDP-forming] A (733 aa).

In the N-terminal section; belongs to the glycosyltransferase 20 family. This sequence in the C-terminal section; belongs to the trehalose phosphatase family.

It carries out the reaction D-glucose 6-phosphate + UDP-alpha-D-glucose = alpha,alpha-trehalose 6-phosphate + UDP + H(+). Its function is as follows. Synthesizes trehalose 6-phosphate, the precursor for the production of trehalose, the main carbohydrate storage reserve of the dormant spore. Trehalose accumulates in both prestalk and prespore cells and then is rapidly metabolized during terminal differentiation of stalk cells, while being stored in spores, where it serves as the principal energy and carbon source for germination. This is Alpha,alpha-trehalose-phosphate synthase [UDP-forming] A (tpsA) from Dictyostelium discoideum (Social amoeba).